Reading from the N-terminus, the 338-residue chain is MENLDALVSQALEAVRHTEDVNALEQIRVHYLGKKGELTQVMKTLGDLPAEERPKVGALINVAKEKVQDALNARKTELEGAALAARLAAERIDVTLPGRGQLSGGLHPVTRTLERIEQCFSRIGYEVAEGPEVEDDYHNFEALNIPGHHPARAMHDTFYFNANMLLRTHTSPVQVRTMESQQPPIRIVCPGRVYRCDSDLTHSPMFHQVEGLLVDEGVSFADLKGTIEEFLRAFFEKQLEVRFRPSFFPFTEPSAEVDIQCVICSGNGCRVCKQTGWLEVMGCGMVHPNVLRMSNIDPEKFQGFAFGMGAERLAMLRYGVNDLRLFFDNDLRFLGQFR.

Residue glutamate 252 participates in Mg(2+) binding.

This sequence belongs to the class-II aminoacyl-tRNA synthetase family. Phe-tRNA synthetase alpha subunit type 1 subfamily. As to quaternary structure, tetramer of two alpha and two beta subunits. Mg(2+) is required as a cofactor.

It is found in the cytoplasm. It carries out the reaction tRNA(Phe) + L-phenylalanine + ATP = L-phenylalanyl-tRNA(Phe) + AMP + diphosphate + H(+). In Pseudomonas aeruginosa (strain UCBPP-PA14), this protein is Phenylalanine--tRNA ligase alpha subunit.